An 87-amino-acid polypeptide reads, in one-letter code: Large ribosomal subunit protein eL20 (87 aa).

The protein belongs to the eukaryotic ribosomal protein eL20 family. Part of the 50S ribosomal subunit. Binds 23S rRNA.

The chain is Large ribosomal subunit protein eL20 from Hyperthermus butylicus (strain DSM 5456 / JCM 9403 / PLM1-5).